A 454-amino-acid polypeptide reads, in one-letter code: UDP-N-acetylmuramoylalanine--D-glutamate ligase (454 aa).

An ATP-binding site is contributed by 117-123; it reads GTNGKTT.

It belongs to the MurCDEF family.

It is found in the cytoplasm. It carries out the reaction UDP-N-acetyl-alpha-D-muramoyl-L-alanine + D-glutamate + ATP = UDP-N-acetyl-alpha-D-muramoyl-L-alanyl-D-glutamate + ADP + phosphate + H(+). It functions in the pathway cell wall biogenesis; peptidoglycan biosynthesis. Cell wall formation. Catalyzes the addition of glutamate to the nucleotide precursor UDP-N-acetylmuramoyl-L-alanine (UMA). The sequence is that of UDP-N-acetylmuramoylalanine--D-glutamate ligase from Alkaliphilus oremlandii (strain OhILAs) (Clostridium oremlandii (strain OhILAs)).